A 557-amino-acid polypeptide reads, in one-letter code: 2-succinyl-5-enolpyruvyl-6-hydroxy-3-cyclohexene-1-carboxylate synthase (557 aa).

It belongs to the TPP enzyme family. MenD subfamily. In terms of assembly, homodimer. Mg(2+) serves as cofactor. Mn(2+) is required as a cofactor. The cofactor is thiamine diphosphate.

The catalysed reaction is isochorismate + 2-oxoglutarate + H(+) = 5-enolpyruvoyl-6-hydroxy-2-succinyl-cyclohex-3-ene-1-carboxylate + CO2. Its pathway is quinol/quinone metabolism; 1,4-dihydroxy-2-naphthoate biosynthesis; 1,4-dihydroxy-2-naphthoate from chorismate: step 2/7. It functions in the pathway quinol/quinone metabolism; menaquinone biosynthesis. In terms of biological role, catalyzes the thiamine diphosphate-dependent decarboxylation of 2-oxoglutarate and the subsequent addition of the resulting succinic semialdehyde-thiamine pyrophosphate anion to isochorismate to yield 2-succinyl-5-enolpyruvyl-6-hydroxy-3-cyclohexene-1-carboxylate (SEPHCHC). The protein is 2-succinyl-5-enolpyruvyl-6-hydroxy-3-cyclohexene-1-carboxylate synthase of Staphylococcus aureus (strain USA300).